The sequence spans 693 residues: Ion-translocating oxidoreductase complex subunit C (693 aa).

2 4Fe-4S ferredoxin-type domains span residues 368 to 397 and 407 to 436; these read MEPV…QQLY and KARD…VQYY. [4Fe-4S] cluster-binding residues include Cys377, Cys380, Cys383, Cys387, Cys416, Cys419, Cys422, and Cys426. Residues 539 to 548 show a composition bias toward basic and acidic residues; it reads REERVREKQS. The segment at 539–564 is disordered; sequence REERVREKQSQQETPATEVTPEELDP.

Belongs to the 4Fe4S bacterial-type ferredoxin family. RnfC subfamily. As to quaternary structure, the complex is composed of six subunits: RnfA, RnfB, RnfC, RnfD, RnfE and RnfG. It depends on [4Fe-4S] cluster as a cofactor.

Its subcellular location is the cell inner membrane. Part of a membrane-bound complex that couples electron transfer with translocation of ions across the membrane. This Pectobacterium atrosepticum (strain SCRI 1043 / ATCC BAA-672) (Erwinia carotovora subsp. atroseptica) protein is Ion-translocating oxidoreductase complex subunit C.